The following is a 434-amino-acid chain: Asparagine--tRNA ligase (434 aa).

It belongs to the class-II aminoacyl-tRNA synthetase family. Homodimer.

It localises to the cytoplasm. The enzyme catalyses tRNA(Asn) + L-asparagine + ATP = L-asparaginyl-tRNA(Asn) + AMP + diphosphate + H(+). This chain is Asparagine--tRNA ligase, found in Oenococcus oeni (strain ATCC BAA-331 / PSU-1).